The primary structure comprises 406 residues: Tyrosine--tRNA ligase (406 aa).

L-tyrosine is bound at residue Tyr-39. The short motif at 44–53 (PTADSLHVGH) is the 'HIGH' region element. Positions 172 and 176 each coordinate L-tyrosine. Positions 232–236 (KMGKT) match the 'KMSKS' region motif. Residue Lys-235 coordinates ATP. An S4 RNA-binding domain is found at 344–404 (KELLDVLVDR…LGKKKFYNIV (61 aa)).

Belongs to the class-I aminoacyl-tRNA synthetase family. TyrS type 1 subfamily. Homodimer.

Its subcellular location is the cytoplasm. The enzyme catalyses tRNA(Tyr) + L-tyrosine + ATP = L-tyrosyl-tRNA(Tyr) + AMP + diphosphate + H(+). Catalyzes the attachment of tyrosine to tRNA(Tyr) in a two-step reaction: tyrosine is first activated by ATP to form Tyr-AMP and then transferred to the acceptor end of tRNA(Tyr). In Fusobacterium nucleatum subsp. nucleatum (strain ATCC 25586 / DSM 15643 / BCRC 10681 / CIP 101130 / JCM 8532 / KCTC 2640 / LMG 13131 / VPI 4355), this protein is Tyrosine--tRNA ligase.